We begin with the raw amino-acid sequence, 271 residues long: NADPH-dependent 7-cyano-7-deazaguanine reductase (271 aa).

Residue 81–83 participates in substrate binding; the sequence is IES. An NADPH-binding site is contributed by 83–84; it reads SK. The Thioimide intermediate role is filled by Cys-177. Asp-184 (proton donor) is an active-site residue. 216–217 is a substrate binding site; the sequence is HE. 245 to 246 serves as a coordination point for NADPH; it reads RG.

Belongs to the GTP cyclohydrolase I family. QueF type 2 subfamily. In terms of assembly, homodimer.

The protein resides in the cytoplasm. It catalyses the reaction 7-aminomethyl-7-carbaguanine + 2 NADP(+) = 7-cyano-7-deazaguanine + 2 NADPH + 3 H(+). It functions in the pathway tRNA modification; tRNA-queuosine biosynthesis. Functionally, catalyzes the NADPH-dependent reduction of 7-cyano-7-deazaguanine (preQ0) to 7-aminomethyl-7-deazaguanine (preQ1). This is NADPH-dependent 7-cyano-7-deazaguanine reductase from Xanthomonas campestris pv. campestris (strain 8004).